The chain runs to 1022 residues: Protein trachealess (1022 aa).

Residues 86–139 (LRKEKSRDAARSRRGKENYEFYELAKMLPLPAAITSQLDKASIIRLTISYLKLR) form the bHLH domain. In terms of domain architecture, PAS 1 spans 174–244 (EQHQGTHILQ…DQLGLSLTSG (71 aa)). The segment at 239-289 (LSLTSGGGGGGGSSSSGGGGGGAGGGMASPTSGASDDGSGTHGTNNPDVAA) is disordered. The segment covering 243-265 (SGGGGGGGSSSSGGGGGGAGGGM) has biased composition (gly residues). Residues 280–289 (HGTNNPDVAA) show a composition bias toward polar residues. Residues 391-461 (PPPSVHEIRL…KSHSDLIEKG (71 aa)) enclose the PAS 2 domain. The PAC domain maps to 465–508 (TGYYRLMNKSGGYTWLQTCATVVCSTKNADEQNIICVNYVISNR). Disordered regions lie at residues 525–686 (DSIK…ADSA), 849–896 (AMTP…GDVV), and 962–996 (DDQG…ASQA). 2 stretches are compositionally biased toward low complexity: residues 578 to 587 (RSAAASHGSS) and 611 to 625 (PTTV…TPPV). The Nuclear localization signal motif lies at 629–636 (KRKRKTKA). The residue at position 673 (serine 673) is a Phosphoserine; by PKB/Akt1. The span at 851-864 (TPPSSVSPRDSNQP) shows a compositional bias: polar residues. Positions 987–996 (GSAGSSASQA) are enriched in low complexity.

In terms of assembly, efficient DNA binding requires dimerization with another bHLH protein. Heterodimer with tgo. Post-translationally, ser-673 phosphorylation by PKB/Akt1 is required for nuclear targeting and transcriptional activity. Trachea, salivary gland ducts, posterior spiracles (Filzkoeper primordia) and a subset of cells in the CNS.

The protein resides in the nucleus. Its function is as follows. Transcription factor, master regulator of tracheal cell fates in the embryo, necessary for the development of the salivary gland duct, Malpighian tubules and the posterior spiracles. It may induce a general fate of branched tubular structures of epithelial origin. Functions with tgo to regulate expression of btl. The protein is Protein trachealess (trh) of Drosophila melanogaster (Fruit fly).